A 234-amino-acid polypeptide reads, in one-letter code: Adenosine 5'-phosphosulfate reductase (234 aa).

[4Fe-4S] cluster is bound by residues Cys-120, Cys-121, Cys-203, and Cys-206. The Nucleophile; cysteine thiosulfonate intermediate role is filled by Cys-229.

The protein belongs to the PAPS reductase family. CysH subfamily. [4Fe-4S] cluster serves as cofactor.

The protein resides in the cytoplasm. The catalysed reaction is [thioredoxin]-disulfide + sulfite + AMP + 2 H(+) = adenosine 5'-phosphosulfate + [thioredoxin]-dithiol. The protein operates within sulfur metabolism; hydrogen sulfide biosynthesis; sulfite from sulfate. Its function is as follows. Catalyzes the formation of sulfite from adenosine 5'-phosphosulfate (APS) using thioredoxin as an electron donor. The sequence is that of Adenosine 5'-phosphosulfate reductase from Bacillus cereus (strain 03BB102).